We begin with the raw amino-acid sequence, 125 residues long: Large ribosomal subunit protein bL12 (125 aa).

It belongs to the bacterial ribosomal protein bL12 family. As to quaternary structure, homodimer. Part of the ribosomal stalk of the 50S ribosomal subunit. Forms a multimeric L10(L12)X complex, where L10 forms an elongated spine to which 2 to 4 L12 dimers bind in a sequential fashion. Binds GTP-bound translation factors.

Its function is as follows. Forms part of the ribosomal stalk which helps the ribosome interact with GTP-bound translation factors. Is thus essential for accurate translation. The chain is Large ribosomal subunit protein bL12 from Rickettsia canadensis (strain McKiel).